The following is a 1316-amino-acid chain: DNA-directed RNA polymerase subunit beta' (1316 aa).

The Zn(2+) site is built by Cys60, Cys62, Cys75, and Cys78. Residues Asp535, Asp537, and Asp539 each coordinate Mg(2+). Residues Cys891, Cys968, Cys975, and Cys978 each coordinate Zn(2+).

This sequence belongs to the RNA polymerase beta' chain family. The RNAP catalytic core consists of 2 alpha, 1 beta, 1 beta' and 1 omega subunit. When a sigma factor is associated with the core the holoenzyme is formed, which can initiate transcription. The cofactor is Mg(2+). It depends on Zn(2+) as a cofactor.

The enzyme catalyses RNA(n) + a ribonucleoside 5'-triphosphate = RNA(n+1) + diphosphate. Its function is as follows. DNA-dependent RNA polymerase catalyzes the transcription of DNA into RNA using the four ribonucleoside triphosphates as substrates. The chain is DNA-directed RNA polymerase subunit beta' from Mycobacterium tuberculosis (strain CDC 1551 / Oshkosh).